The chain runs to 156 residues: Small ribosomal subunit protein uS7 (156 aa).

This sequence belongs to the universal ribosomal protein uS7 family. As to quaternary structure, part of the 30S ribosomal subunit. Contacts proteins S9 and S11.

One of the primary rRNA binding proteins, it binds directly to 16S rRNA where it nucleates assembly of the head domain of the 30S subunit. Is located at the subunit interface close to the decoding center, probably blocks exit of the E-site tRNA. The sequence is that of Small ribosomal subunit protein uS7 from Afipia carboxidovorans (strain ATCC 49405 / DSM 1227 / KCTC 32145 / OM5) (Oligotropha carboxidovorans).